The primary structure comprises 154 residues: Myoglobin (154 aa).

A Globin domain is found at 2–148 (GLSDGEWQLV…FRNDMAAKYK (147 aa)). Residue Ser4 is modified to Phosphoserine. His65 lines the nitrite pocket. An O2-binding site is contributed by His65. Thr68 is modified (phosphothreonine). His94 is a binding site for heme b.

The protein belongs to the globin family. As to quaternary structure, monomeric.

The protein localises to the cytoplasm. Its subcellular location is the sarcoplasm. The enzyme catalyses Fe(III)-heme b-[protein] + nitric oxide + H2O = Fe(II)-heme b-[protein] + nitrite + 2 H(+). It carries out the reaction H2O2 + AH2 = A + 2 H2O. Monomeric heme protein which primary function is to store oxygen and facilitate its diffusion within muscle tissues. Reversibly binds oxygen through a pentacoordinated heme iron and enables its timely and efficient release as needed during periods of heightened demand. Depending on the oxidative conditions of tissues and cells, and in addition to its ability to bind oxygen, it also has a nitrite reductase activity whereby it regulates the production of bioactive nitric oxide. Under stress conditions, like hypoxia and anoxia, it also protects cells against reactive oxygen species thanks to its pseudoperoxidase activity. This is Myoglobin (MB) from Macaca fascicularis (Crab-eating macaque).